Consider the following 466-residue polypeptide: Asparagine--tRNA ligase (466 aa).

The protein belongs to the class-II aminoacyl-tRNA synthetase family. Homodimer.

The protein localises to the cytoplasm. The enzyme catalyses tRNA(Asn) + L-asparagine + ATP = L-asparaginyl-tRNA(Asn) + AMP + diphosphate + H(+). The polypeptide is Asparagine--tRNA ligase (Shewanella frigidimarina (strain NCIMB 400)).